The chain runs to 451 residues: UDP-N-acetylmuramoylalanine--D-glutamate ligase (451 aa).

G116–T122 contributes to the ATP binding site.

This sequence belongs to the MurCDEF family.

The protein localises to the cytoplasm. The catalysed reaction is UDP-N-acetyl-alpha-D-muramoyl-L-alanine + D-glutamate + ATP = UDP-N-acetyl-alpha-D-muramoyl-L-alanyl-D-glutamate + ADP + phosphate + H(+). It functions in the pathway cell wall biogenesis; peptidoglycan biosynthesis. In terms of biological role, cell wall formation. Catalyzes the addition of glutamate to the nucleotide precursor UDP-N-acetylmuramoyl-L-alanine (UMA). The chain is UDP-N-acetylmuramoylalanine--D-glutamate ligase from Clostridioides difficile (strain 630) (Peptoclostridium difficile).